Reading from the N-terminus, the 858-residue chain is Bifunctional uridylyltransferase/uridylyl-removing enzyme (858 aa).

Residues 1 to 324 form a uridylyltransferase region; sequence MSAHAAPSPE…PATSGITRVL (324 aa). Residues 325 to 681 are uridylyl-removing; it reads SADRFVEKQG…ARPSPIGDAL (357 aa). The region spanning 443–565 is the HD domain; that stretch reads VDQHILMVLR…VGNERYLTAL (123 aa). 2 ACT domains span residues 682 to 763 and 790 to 858; these read QVLV…PSKG and ILSV…AIAV.

It belongs to the GlnD family. Mg(2+) is required as a cofactor.

The catalysed reaction is [protein-PII]-L-tyrosine + UTP = [protein-PII]-uridylyl-L-tyrosine + diphosphate. The enzyme catalyses [protein-PII]-uridylyl-L-tyrosine + H2O = [protein-PII]-L-tyrosine + UMP + H(+). Its activity is regulated as follows. Uridylyltransferase (UTase) activity is inhibited by glutamine, while glutamine activates uridylyl-removing (UR) activity. Modifies, by uridylylation and deuridylylation, the PII regulatory proteins (GlnB and homologs), in response to the nitrogen status of the cell that GlnD senses through the glutamine level. Under low glutamine levels, catalyzes the conversion of the PII proteins and UTP to PII-UMP and PPi, while under higher glutamine levels, GlnD hydrolyzes PII-UMP to PII and UMP (deuridylylation). Thus, controls uridylylation state and activity of the PII proteins, and plays an important role in the regulation of nitrogen assimilation and metabolism. The protein is Bifunctional uridylyltransferase/uridylyl-removing enzyme of Burkholderia orbicola (strain MC0-3).